Consider the following 460-residue polypeptide: U-box domain-containing protein 9 (460 aa).

A U-box domain is found at 73–147 (SCPEEFRCPL…SKWCKKNGLE (75 aa)). ARM repeat units follow at residues 201–244 (TEFR…NISI), 248–287 (SNKKLVCENPNVIPLLIDALRRGTVATRSNAAAAIFTLSA), and 289–328 (DSNKVLIGKSGILKPLIDLLEEGNPLAIKDVAAAIFTLCI).

In terms of assembly, binds to SD11, SD16, SD17, SD18, SD113, SD129 and SD25. In terms of processing, phosphorylated by SD1-6 and SD1-7.

It localises to the nucleus. The protein resides in the cell membrane. It carries out the reaction S-ubiquitinyl-[E2 ubiquitin-conjugating enzyme]-L-cysteine + [acceptor protein]-L-lysine = [E2 ubiquitin-conjugating enzyme]-L-cysteine + N(6)-ubiquitinyl-[acceptor protein]-L-lysine.. It functions in the pathway protein modification; protein ubiquitination. Functions as an E3 ubiquitin ligase. May be involved in the abscisic acid-mediated signaling pathway, at least during germination. This Arabidopsis thaliana (Mouse-ear cress) protein is U-box domain-containing protein 9 (PUB9).